The primary structure comprises 607 residues: UvrABC system protein C (607 aa).

Residues 16–94 (GRPGVYRMFD…IKEWRPPYNI (79 aa)) enclose the GIY-YIG domain. One can recognise a UVR domain in the interval 203–238 (NALSDELNASMEKAAMALDFERAAELRDQVALLRRV).

This sequence belongs to the UvrC family. In terms of assembly, interacts with UvrB in an incision complex.

The protein resides in the cytoplasm. In terms of biological role, the UvrABC repair system catalyzes the recognition and processing of DNA lesions. UvrC both incises the 5' and 3' sides of the lesion. The N-terminal half is responsible for the 3' incision and the C-terminal half is responsible for the 5' incision. This Pseudomonas syringae pv. syringae (strain B728a) protein is UvrABC system protein C.